The following is a 402-amino-acid chain: Major outer membrane porin (402 aa).

Positions 1 to 22 (MKKLLKSALLFAATGSALSLQA) are cleaved as a signal peptide.

The protein belongs to the chlamydial porin (CP) (TC 1.B.2) family. Part of a disulfide cross-linked outer membrane complex (COMC) composed of the major outer membrane porin (MOMP), the small cysteine-rich protein (OmcA) and the large cysteine-rich periplasmic protein (OmcB).

Its subcellular location is the cell outer membrane. Functionally, in elementary bodies (EBs, the infectious stage, which is able to survive outside the host cell) provides the structural integrity of the outer envelope through disulfide cross-links with the small cysteine-rich protein and the large cysteine-rich periplasmic protein. It has been described in publications as the Sarkosyl-insoluble COMC (Chlamydia outer membrane complex), and serves as the functional equivalent of peptidoglycan. It is present but some of the disulfide bonds are reduced in reticulate bodies (RBs). Its function is as follows. Permits diffusion of specific solutes through the outer membrane. The polypeptide is Major outer membrane porin (ompA) (Chlamydophila psittaci (strain ATCC VR-125 / 6BC) (Chlamydia psittaci)).